We begin with the raw amino-acid sequence, 157 residues long: Phosphopantetheine adenylyltransferase (157 aa).

Serine 9 lines the substrate pocket. Residues serine 9–phenylalanine 10 and histidine 17 each bind ATP. Positions 41, 73, and 87 each coordinate substrate. ATP is bound by residues glycine 88–arginine 90, glutamate 98, and tyrosine 122–serine 128.

The protein belongs to the bacterial CoaD family. In terms of assembly, homohexamer. Requires Mg(2+) as cofactor.

It localises to the cytoplasm. The catalysed reaction is (R)-4'-phosphopantetheine + ATP + H(+) = 3'-dephospho-CoA + diphosphate. The protein operates within cofactor biosynthesis; coenzyme A biosynthesis; CoA from (R)-pantothenate: step 4/5. Functionally, reversibly transfers an adenylyl group from ATP to 4'-phosphopantetheine, yielding dephospho-CoA (dPCoA) and pyrophosphate. The sequence is that of Phosphopantetheine adenylyltransferase from Mycobacterium marinum (strain ATCC BAA-535 / M).